A 1068-amino-acid polypeptide reads, in one-letter code: MHQPPESTAAAAAAADISARKMAHPAVFPRRGSGSGSASALNAAGTGVGSSATSSEDFPPPSLLQPPPPAASSTSGPQPPPPQSLNLLSQAQLQAQPLAPGGTQMKKKSGFQITSVTPAQISASISSNNSIAEDTESYDDLDESHTEDLSSSEILDVSLSRATDLGEPERSSSEETLNNFQEAETPGAVSPNQPHLPQPHLPHLPQQNVVINGNAHPHHLHHHHHIHHGHHLQHGHHHPSHVAVASASIPGGPPSSPVSRKLSTTGSSDSITPVAPTSAVSSSGSPASVMTNIRAPSTTGGIGISSVTGTSTVNNVNITAVGSLNPNMTSSMLGNANISTSNIPSAASVSVGPGVTSGVNVNILSGMGNGTISSSAAVSSVPNAAAGMTGGSVSSQQQQPTVNTSRFRVVKLDSSSEPFKKGRWTCTEFYEKENAVPATEGVLINKVVETVKQNPIEVTSERESTSGSSVSSSVSTLSHYTESVGSGEMGAPTVVVQQQQQQQQPALQGVTLQQMDFGSTGPQSIPAVSIPQSISQSQISQVQLQSQELSYQQKQSLQPVPLQATMSAATGIQPSPVNVVGVTSALGQQPSISSLAQPQLPYSQAAPPVQTPLPGAPPPQQLQYGQQQPMVSTQMAPGHVKSVTQNPASEYVQQQPILQTAMSSGQPSSAGVGAGTTVIPVAQPQGIQLPVQPTAVPAQPAGASVQPVGQAQAAVSAVPTGSQIANIGQQANIPTAVQQPSTQVPPSVIQQGAPPSSQVVPPAQTGIIHQGVQTSAASLPQQLVIASQSTLLTVPPQPQGVEPVAQGVVSQQLPAVSPLPSVSSISVTSQVSSTGPSGMPSAPANLVPPQNIAQTPATQNGNLVQSVSQSPLIATNINLPLAQQIPLSSTQFSAQSLAQAIGSQIEDARRPAEPSLVGLPQTISGDSGGMSAVSDGSSSSLAASASLFPLKVLPLTTPLVDGEDESSSGASVVAIDNKIEQAMDLVKSHLMYAVREEVEVLKEQIKELIEKNSQLEQENNLLKTLASPEQLAQFQAQLQTGSPPATTQPQGTTQPPAQPASQGSGPTA.

The segment at 1–98 (MHQPPESTAA…SQAQLQAQPL (98 aa)) is required for interaction with TGFBR1 and promotion of TGF-beta signaling. Disordered stretches follow at residues 23–110 (AHPA…KKSG), 125–288 (ISSN…SPAS), and 602–623 (YSQA…QQLQ). A compositionally biased stretch (low complexity) spans 36–55 (GSASALNAAGTGVGSSATSS). Positions 58-70 (FPPPSLLQPPPPA) are enriched in pro residues. Low complexity predominate over residues 84–100 (SLNLLSQAQLQAQPLAP). Acidic residues predominate over residues 133 to 142 (EDTESYDDLD). The segment covering 216–240 (HPHHLHHHHHIHHGHHLQHGHHHPS) has biased composition (basic residues). The segment covering 241–250 (HVAVASASIP) has biased composition (low complexity). The segment covering 261–271 (KLSTTGSSDSI) has biased composition (polar residues). S263 is modified (phosphoserine). A compositionally biased stretch (low complexity) spans 272–288 (TPVAPTSAVSSSGSPAS). A compositionally biased stretch (pro residues) spans 609–620 (VQTPLPGAPPPQ). The tract at residues 1000–1021 (VLKEQIKELIEKNSQLEQENNL) is leucine-zipper. A disordered region spans residues 1032 to 1068 (AQFQAQLQTGSPPATTQPQGTTQPPAQPASQGSGPTA). Low complexity predominate over residues 1039 to 1068 (QTGSPPATTQPQGTTQPPAQPASQGSGPTA).

Belongs to the TSC-22/Dip/Bun family. As to quaternary structure, forms homodimers. Forms heterodimers. Component of a complex composed of TSC22D1 (via N-terminus), TGFBR1 and TGFBR2; the interaction between TSC22D1 and TGFBR1 is inhibited by SMAD7 and promoted by TGFB1. Interacts with SMAD7; the interaction requires TGF-beta and the interaction is inhibited by TGFBR1. Interacts with TPT1/fortilin; interaction results in the destabilization of TSC22D1 protein and prevents TSC22D1-mediated apoptosis. Interacts with SMAD4 (via N-terminus). Interacts with ACVRL1/ALK1, ACVR1/ALK2, BMPR1A/ALK3, ACVR1B/ALK4, BMPR1B/ALK6, ACVR2A/ACTRII, and BMPR2. Interacts with SMAD6. Interacts with TFE3; the interaction is enhanced in the presence of TGF-beta. In terms of assembly, forms a heterodimer with TSC22D4/THG1. Forms a heterodimer with TSC22D4/THG1. Interacts with histone H1-2. Interacts with GNL3.

The protein resides in the cytoplasm. It is found in the nucleus. The protein localises to the cell membrane. It localises to the mitochondrion. Transcriptional repressor. Acts on the C-type natriuretic peptide (CNP) promoter. Acts to promote CASP3-mediated apoptosis. Positively regulates TGF-beta signaling by interacting with SMAD7 which inhibits binding of SMAD7 to TGFBR1, preventing recruitment of SMURF ubiquitin ligases to TGFBR1 and inhibiting SMURF-mediated ubiquitination and degradation of TGFBR1. Contributes to enhancement of TGF-beta signaling by binding to and modulating the transcription activator activity of SMAD4. Promotes TGF-beta-induced transcription of COL1A2; via its interaction with TFE3 at E-boxes in the gene proximal promoter. Plays a role in the repression of hematopoietic precursor cell growth. Promotes IL2 deprivation-induced apoptosis in T-lymphocytes, via repression of TSC22D3/GILZ transcription and activation of the caspase cascade. In terms of biological role, may act to negatively regulate TGFB3 signaling and thereby inhibit cell death in mammary gland cells. Functionally, positively regulates cell death in response to TGFB3 during mammary gland involution. This Macaca fascicularis (Crab-eating macaque) protein is TSC22 domain family protein 1.